Consider the following 429-residue polypeptide: Threonine synthase (429 aa).

K107 carries the N6-(pyridoxal phosphate)lysine modification.

This sequence belongs to the threonine synthase family. The cofactor is pyridoxal 5'-phosphate.

The enzyme catalyses O-phospho-L-homoserine + H2O = L-threonine + phosphate. It participates in amino-acid biosynthesis; L-threonine biosynthesis; L-threonine from L-aspartate: step 5/5. Catalyzes the gamma-elimination of phosphate from L-phosphohomoserine and the beta-addition of water to produce L-threonine. The sequence is that of Threonine synthase (thrC) from Serratia marcescens.